A 682-amino-acid chain; its full sequence is Tetratricopeptide repeat protein 39B (682 aa).

TPR repeat units follow at residues 393 to 426 (SLVL…QEEW) and 626 to 659 (PFTL…YKDY).

Belongs to the TTC39 family.

Its function is as follows. Regulates high density lipoprotein (HDL) cholesterol metabolism by promoting the ubiquitination and degradation of the oxysterols receptors LXR (NR1H2 and NR1H3). This is Tetratricopeptide repeat protein 39B from Homo sapiens (Human).